Consider the following 247-residue polypeptide: UPF0280 protein MmarC6_1437 (247 aa).

This sequence belongs to the UPF0280 family.

This is UPF0280 protein MmarC6_1437 from Methanococcus maripaludis (strain C6 / ATCC BAA-1332).